We begin with the raw amino-acid sequence, 466 residues long: Ribulose bisphosphate carboxylase large chain (466 aa).

Residue Lys5 is modified to N6,N6,N6-trimethyllysine. 2 residues coordinate substrate: Asn114 and Thr164. The active-site Proton acceptor is the Lys166. Lys168 is a substrate binding site. Residues Lys192, Asp194, and Glu195 each coordinate Mg(2+). Lys192 carries the N6-carboxylysine modification. Residue His285 is the Proton acceptor of the active site. Arg286, His318, and Ser370 together coordinate substrate.

Belongs to the RuBisCO large chain family. Type I subfamily. As to quaternary structure, heterohexadecamer of 8 large chains and 8 small chains; disulfide-linked. The disulfide link is formed within the large subunit homodimers. The cofactor is Mg(2+). Post-translationally, the disulfide bond which can form in the large chain dimeric partners within the hexadecamer appears to be associated with oxidative stress and protein turnover.

The protein resides in the plastid. It is found in the chloroplast. The enzyme catalyses 2 (2R)-3-phosphoglycerate + 2 H(+) = D-ribulose 1,5-bisphosphate + CO2 + H2O. It catalyses the reaction D-ribulose 1,5-bisphosphate + O2 = 2-phosphoglycolate + (2R)-3-phosphoglycerate + 2 H(+). RuBisCO catalyzes two reactions: the carboxylation of D-ribulose 1,5-bisphosphate, the primary event in carbon dioxide fixation, as well as the oxidative fragmentation of the pentose substrate in the photorespiration process. Both reactions occur simultaneously and in competition at the same active site. This Moringa oleifera (Horseradish tree) protein is Ribulose bisphosphate carboxylase large chain.